The primary structure comprises 652 residues: Acetyl-coenzyme A synthetase (652 aa).

CoA is bound by residues 189–192 (RGDK) and T311. ATP contacts are provided by residues 387–389 (GEP), 411–416 (DTWWQT), D500, and R515. S523 provides a ligand contact to CoA. An ATP-binding site is contributed by R526. Mg(2+) contacts are provided by H539 and V542. R584 is a CoA binding site. N6-acetyllysine is present on K609.

The protein belongs to the ATP-dependent AMP-binding enzyme family. Mg(2+) serves as cofactor. In terms of processing, acetylated. Deacetylation by the SIR2-homolog deacetylase activates the enzyme.

It catalyses the reaction acetate + ATP + CoA = acetyl-CoA + AMP + diphosphate. Catalyzes the conversion of acetate into acetyl-CoA (AcCoA), an essential intermediate at the junction of anabolic and catabolic pathways. AcsA undergoes a two-step reaction. In the first half reaction, AcsA combines acetate with ATP to form acetyl-adenylate (AcAMP) intermediate. In the second half reaction, it can then transfer the acetyl group from AcAMP to the sulfhydryl group of CoA, forming the product AcCoA. The sequence is that of Acetyl-coenzyme A synthetase from Bartonella bacilliformis (strain ATCC 35685 / KC583 / Herrer 020/F12,63).